We begin with the raw amino-acid sequence, 831 residues long: Cysteine--tRNA ligase, cytoplasmic (831 aa).

Ala2 bears the N-acetylalanine mark. At Ser102 the chain carries Phosphoserine. Cys138 is a Zn(2+) binding site. Residue Gly139 participates in L-cysteine binding. The 'HIGH' region signature appears at 140–150 (PTVYDASHMGH). Thr179 is a binding site for L-cysteine. The 'KIIK' region signature appears at 184–187 (KIIR). Ser388 and Ser390 each carry phosphoserine. Zn(2+) contacts are provided by Cys431, His456, and Glu460. His456 provides a ligand contact to L-cysteine. A 'KMSKS' region motif is present at residues 489–493 (KMSKS). Position 492 (Lys492) interacts with ATP. Over residues 736-762 (GKKRAEEEKRRKKEEAARKKQEQEAAK) the composition is skewed to basic and acidic residues. The disordered stretch occupies residues 736–766 (GKKRAEEEKRRKKEEAARKKQEQEAAKLAKM). A Phosphoserine modification is found at Ser829.

It belongs to the class-I aminoacyl-tRNA synthetase family. As to quaternary structure, homodimer. Zn(2+) serves as cofactor.

It is found in the cytoplasm. It carries out the reaction tRNA(Cys) + L-cysteine + ATP = L-cysteinyl-tRNA(Cys) + AMP + diphosphate. Catalyzes the ATP-dependent ligation of cysteine to tRNA(Cys). This Mus musculus (Mouse) protein is Cysteine--tRNA ligase, cytoplasmic (Cars1).